A 685-amino-acid chain; its full sequence is MKRRSVLLSGVALSGTALANDSIFFSPLKYLGAEQQRSIDASRSLLDNLIPPSLPQYDNLAGKLARRAVLTSKKLVYVWTENFANVKGVPMARSVPLGELPNVDWLLKTAGVIVELIVNFVASLPASAAAQFERIAAGLSGDLEAARQVHEALLEEAKNDPAAAGSLLLRFTELQTRVIALLTRVGLLVDDILKSASNLVTQGGQGDGLNRFRAVFGTLRLPEVADSFRDDEAFAYWRVAGPNPLLIRRVDALPANFPLGEEQFRRVMGADDSLLEAAASRRLYLLDYAELGKLAPSGAVDKLLTGTGFAYAPIALFALGKDRAGLLPVAIQCGQDPATHPMFVRPAESESDLYWGWQMAKTVVQVAEENYHEMFVHLAQTHLVSEAFCLATQRTLAPSHPLHVLLAPHFEGTLFINEGAARILLPSAGFIDVMFAAPIQDTQATAGGNRLGFDFYRGMLPESLKARNVDDPAALPDYPYRDDGLLVWNAIRQWAADYVAVYYASDGDVTADVELAAWVGEVIGSGKVAGFRPITGRSQLVEVLTMVIFTASAQHAAVNFPQPSMMTYAPAICAMSAAPAPDSPSGKSEADWLKMMPPTLVALEKVNIYHLLGSVYHGRLGDYRQTGFPYAPVFSDRRVTASGGPLERFQARLKEVEATIRTRNQARRKPYEYLLPSRIPASTNI.

The first 19 residues, 1–19 (MKRRSVLLSGVALSGTALA), serve as a signal peptide directing secretion. Residues 122-685 (ASLPASAAAQ…PSRIPASTNI (564 aa)) enclose the Lipoxygenase domain. Fe cation-binding residues include H377, H382, H555, N559, and I685.

The protein belongs to the lipoxygenase family. Monomer. Fe cation is required as a cofactor.

Its subcellular location is the periplasm. It carries out the reaction (9Z,12Z)-octadecadienoate + O2 = (9S)-hydroperoxy-(10E,12Z)-octadecadienoate. It catalyses the reaction (9Z)-octadecenoate + O2 = (8E,10S)-10-hydroperoxy-octadeca-8-enoate. The catalysed reaction is (9Z,12Z)-octadecadienoate + O2 = (8E,10S,12Z)-10-hydroperoxyoctadeca-8,12-dienoate. The enzyme catalyses (9Z,12Z,15Z)-octadecatrienoate + O2 = (8E,10S,12Z,15Z)-10-hydroperoxyoctadeca-8,12,15-trienoate. It carries out the reaction (9Z,12Z)-octadecadienoate + O2 = (13S)-hydroperoxy-(9Z,11E)-octadecadienoate. It catalyses the reaction (9Z,12Z,15Z)-octadecatrienoate + O2 = (13S)-hydroperoxy-(9Z,11E,15Z)-octadecatrienoate. Inhibited by Ba(2+), Zn(2+) and Fe(3+). In presence of oxygen, converts linoleate into (9S)-hydroperoxy-10,12-octadecenoate (9HPOD), which spontaneously decomposes to the corresponding 9-hydroxy-10,12-octadecenoate (9HOD), and into 13-hydroperoxy-9,11-octadecenoate (13HPOD) which spontaneously decomposes to the corresponding 13-hydroxy-9,11-octadecenoate (13HOD). Also active on linolenate. To a lesser extent, is also able to convert oleate into (10S)-hydroperoxy-8E-octadecenoate, which spontaneously decomposes to the corresponding 10-hydroxy-8E-octadecenoate. Is almost not active on arachidonate. This is Linoleate 9/13-lipoxygenase (lox) from Pseudomonas aeruginosa.